The chain runs to 270 residues: tRNA pseudouridine synthase A (270 aa).

The active-site Nucleophile is Asp51. Tyr109 is a binding site for substrate.

This sequence belongs to the tRNA pseudouridine synthase TruA family. In terms of assembly, homodimer.

It carries out the reaction uridine(38/39/40) in tRNA = pseudouridine(38/39/40) in tRNA. Functionally, formation of pseudouridine at positions 38, 39 and 40 in the anticodon stem and loop of transfer RNAs. The protein is tRNA pseudouridine synthase A of Burkholderia multivorans (strain ATCC 17616 / 249).